Here is a 249-residue protein sequence, read N- to C-terminus: Proline-rich antigen (249 aa).

2 stretches are compositionally biased toward pro residues: residues 1 to 20 (MTDQ…PPPG) and 38 to 87 (YPPP…PPGP). The segment at 1-87 (MTDQPPPSGS…GAYAPPPPGP (87 aa)) is disordered. A 1-1; approximate repeat occupies 34-43 (LGSAYPPPTA). A 5 X 10 AA tandem repeats of [PV]-G-G-S-Y-P-P-P-P-P region spans residues 34–85 (LGSAYPPPTAPPVGGSYPPPPPPGGSYPPPPPPGGSYPPPPPSTGAYAPPPP). 3 consecutive repeat copies span residues 46 to 55 (VGGSYPPPPP), 56 to 65 (PGGSYPPPPP), and 66 to 75 (PGGSYPPPPP). The stretch at 76–85 (STGAYAPPPP) is one 1-5; approximate repeat. One can recognise an RDD domain in the interval 99 to 242 (FWVTRVLAYV…KRQTLADKIM (144 aa)). Repeat copies occupy residues 101 to 123 (VTRV…IGML) and 134 to 156 (VTDI…IGML). A 2 X 23 AA approximate repeats region spans residues 101–156 (VTRVLAYVIDNIPATVLLGIGMLIQTLTKQEACVTDITQYNVNQYCATQPTGIGML). Helical transmembrane passes span 104–124 (VLAY…GMLI), 151–171 (TGIG…YLVW), and 212–232 (LAHF…LWDS).

It belongs to the mycobacterial Pra family.

Its subcellular location is the cell membrane. This Mycobacterium leprae (strain TN) protein is Proline-rich antigen (ag36).